The sequence spans 59 residues: UPF0434 protein Pnec_0311 (59 aa).

This sequence belongs to the UPF0434 family.

The polypeptide is UPF0434 protein Pnec_0311 (Polynucleobacter necessarius subsp. necessarius (strain STIR1)).